A 446-amino-acid polypeptide reads, in one-letter code: Na(+)-translocating NADH-quinone reductase subunit A (446 aa).

It belongs to the NqrA family. Composed of six subunits; NqrA, NqrB, NqrC, NqrD, NqrE and NqrF.

It catalyses the reaction a ubiquinone + n Na(+)(in) + NADH + H(+) = a ubiquinol + n Na(+)(out) + NAD(+). Its function is as follows. NQR complex catalyzes the reduction of ubiquinone-1 to ubiquinol by two successive reactions, coupled with the transport of Na(+) ions from the cytoplasm to the periplasm. NqrA to NqrE are probably involved in the second step, the conversion of ubisemiquinone to ubiquinol. The polypeptide is Na(+)-translocating NADH-quinone reductase subunit A (Aliivibrio salmonicida (strain LFI1238) (Vibrio salmonicida (strain LFI1238))).